The following is a 450-amino-acid chain: Glucose-6-phosphate isomerase (450 aa).

Residue Thr39 is modified to Phosphothreonine. Glu291 serves as the catalytic Proton donor. Catalysis depends on residues His312 and Lys426.

Belongs to the GPI family.

Its subcellular location is the cytoplasm. The enzyme catalyses alpha-D-glucose 6-phosphate = beta-D-fructose 6-phosphate. It functions in the pathway carbohydrate biosynthesis; gluconeogenesis. The protein operates within carbohydrate degradation; glycolysis; D-glyceraldehyde 3-phosphate and glycerone phosphate from D-glucose: step 2/4. In terms of biological role, catalyzes the reversible isomerization of glucose-6-phosphate to fructose-6-phosphate. This is Glucose-6-phosphate isomerase from Bacillus anthracis.